We begin with the raw amino-acid sequence, 132 residues long: Small ribosomal subunit protein uS8 (132 aa).

It belongs to the universal ribosomal protein uS8 family. Part of the 30S ribosomal subunit. Contacts proteins S5 and S12.

One of the primary rRNA binding proteins, it binds directly to 16S rRNA central domain where it helps coordinate assembly of the platform of the 30S subunit. This chain is Small ribosomal subunit protein uS8, found in Corynebacterium diphtheriae (strain ATCC 700971 / NCTC 13129 / Biotype gravis).